We begin with the raw amino-acid sequence, 484 residues long: MLLNSNELEHIHSTNHSVNDISIRWGVIGAGQKGNKEADLFAGYKFSNGTTCYPTLAVNFAESDMMHLQNIIKEDRIHFDGLKGAARTPSVVTDLFDPETNPNANGYLDKLAQELGRKFTNEEGEVIVDQFLICLGAGGGVGTGWGSLVLQLIREQFFPCPVSMLISLPSGDPDEINNALVLLSEIDEFMREQDRLFGNSDIKPLANVIVNDNTQMQRIIESQKGTKDLKNRYVNWKEVANDNVVSTLHEINIIPENYGSDNVTYDPSDLIKLLSIPGRFLTIGKARIAKFDLHSLENSIKRSLDEGFFSAEHQFETATMYGGFVLRPSNADFFKDVNTENRIRNTLGEYKRLDEIAGKFGDPIWDNEYAVCYTIFAGMTMPKRYISLAREGKELAEKQEQLRAEAQRKQDEEKVDISFATNRVQKNTFNPYNKNQGFGGASRFSGGKNSAFKRQTSEATSTQNQQEEENIISTLKTSNPFKKR.

32–33 (QK) contacts GTP. Asp64 provides a ligand contact to Mg(2+). Residues 140 to 142 (GVG), Asn213, Lys237, and Asn241 each bind GTP. The required to bind TubR-DNA complex stretch occupies residues 408-484 (RKQDEEKVDI…LKTSNPFKKR (77 aa)). Residues 428-484 (TFNPYNKNQGFGGASRFSGGKNSAFKRQTSEATSTQNQQEEENIISTLKTSNPFKKR) form a disordered region. Over residues 452-484 (FKRQTSEATSTQNQQEEENIISTLKTSNPFKKR) the composition is skewed to polar residues.

The protein belongs to the FtsZ family. TubZ subfamily. As to quaternary structure, forms filaments; a 2-stranded filament forms with the non-hydrolyzable GTP-gamma-S which is probably a precursor to the 4-stranded filament that forms in the presence of GTP. The 4-stranded form binds GDP. In vivo polymerizes to form dynamic filaments that often extend from one cell pole to the other, moving in a unidirectional manner. Filaments polymerize at the plus end and depolymerize at the minus end, a process called treadmilling. Polymerization only occurs above a critical concentration, it does not require upstream tubR. The tubC DNA-TubR complex binds to TubZ. The cofactor is Mg(2+).

The protein resides in the cytoplasm. It carries out the reaction GTP + H2O = GDP + phosphate + H(+). GTPase is inhibited by GTP-gamma-S, which also stabilizes filaments. In terms of biological role, a tubulin-like, filament forming GTPase; the motor component of the type III plasmid partition system which ensures correct segregation of the pBtoxis plasmid. Filaments may seed from the centromere-like site (tubC) when bound by DNA-binding protein TubR; the tubC-TubR complex stabilizes the TubZ filament. Filaments grow at the plus end and depolymerize at the minus end, a process called treadmilling. TubR-tubC complexes track the depolymerizing minus end of the filament, probably pulling plasmid within the cell. Required for pBtoxis plasmid replication/partition. Binds the TubR-tubC complex; GTP is not required for binding to TubR-tubC. TubZ alone does not bind DNA. Has a high GTPase activity in the presence of Mg(2+); in the presence of GTP assembles into dynamic filaments which upon polymerization bind almost exclusively GDP. Filament formation is cooperative, requiring a critical concentration. Formation occurs very quickly and is followed by disassembly as GTP is consumed. This chain is Tubulin-like protein TubZ, found in Bacillus thuringiensis subsp. israelensis.